The sequence spans 199 residues: Fe/S biogenesis protein NfuA (199 aa).

Residues Cys156 and Cys159 each coordinate [4Fe-4S] cluster.

Belongs to the NfuA family. In terms of assembly, homodimer. It depends on [4Fe-4S] cluster as a cofactor.

Functionally, involved in iron-sulfur cluster biogenesis. Binds a 4Fe-4S cluster, can transfer this cluster to apoproteins, and thereby intervenes in the maturation of Fe/S proteins. Could also act as a scaffold/chaperone for damaged Fe/S proteins. This is Fe/S biogenesis protein NfuA from Actinobacillus pleuropneumoniae serotype 5b (strain L20).